We begin with the raw amino-acid sequence, 337 residues long: Ribosomal RNA small subunit methyltransferase C (337 aa).

This sequence belongs to the methyltransferase superfamily. RsmC family. As to quaternary structure, monomer.

It localises to the cytoplasm. It carries out the reaction guanosine(1207) in 16S rRNA + S-adenosyl-L-methionine = N(2)-methylguanosine(1207) in 16S rRNA + S-adenosyl-L-homocysteine + H(+). Its function is as follows. Specifically methylates the guanine in position 1207 of 16S rRNA in the 30S particle. The chain is Ribosomal RNA small subunit methyltransferase C from Proteus mirabilis (strain HI4320).